Consider the following 617-residue polypeptide: RNA polymerase sigma factor RpoD (617 aa).

A disordered region spans residues 170–220 (PDDGSLPAEEVEPVNLKDDSADSKEKDDEEEESDDSSDSDDEGDGGPDPEE). Basic and acidic residues predominate over residues 184-195 (NLKDDSADSKEK). Acidic residues predominate over residues 196-218 (DDEEEESDDSSDSDDEGDGGPDP). The tract at residues 383 to 453 (MVEANLRLVI…TRSIADQART (71 aa)) is sigma-70 factor domain-2. Residues 407 to 410 (DLIQ) carry the Interaction with polymerase core subunit RpoC motif. The interval 462 to 538 (ETINKLNRIS…DSTMQSPIEM (77 aa)) is sigma-70 factor domain-3. The tract at residues 551-604 (VLAGLTAREAKVLRMRFGIDMNTDHTLEEVGKQFDVTRERIRQIEAKALRKLRH) is sigma-70 factor domain-4. Residues 577–596 (LEEVGKQFDVTRERIRQIEA) constitute a DNA-binding region (H-T-H motif).

The protein belongs to the sigma-70 factor family. RpoD/SigA subfamily. As to quaternary structure, interacts transiently with the RNA polymerase catalytic core.

The protein localises to the cytoplasm. Its function is as follows. Sigma factors are initiation factors that promote the attachment of RNA polymerase to specific initiation sites and are then released. This sigma factor is the primary sigma factor during exponential growth. The chain is RNA polymerase sigma factor RpoD from Pseudomonas aeruginosa (strain ATCC 15692 / DSM 22644 / CIP 104116 / JCM 14847 / LMG 12228 / 1C / PRS 101 / PAO1).